Consider the following 158-residue polypeptide: Kalata-B3/B6 (158 aa).

The signal sequence occupies residues 1-22 (MAKFTKSLVLCLLLAAFVGAFG). The propeptide occupies 23–66 (AELSEADKANVVNEIAANIQREILKGVKSSETTLTMFLKEMQLK). Residues 67–96 (GLPTCGETCFGGTCNTPGCSCSSWPICTRN) constitute a cross-link (cyclopeptide (Gly-Asn)). Disulfide bonds link cysteine 71–cysteine 85, cysteine 75–cysteine 87, and cysteine 80–cysteine 93. The propeptide occupies 97–121 (GLPKRAGVKSSETTLTMFLKEMQLK). A cross-link (cyclopeptide (Gly-Asp)) is located at residues 122-151 (GLPTCGETCFGGTCNTPGCTCDPWPICTRD). Intrachain disulfides connect cysteine 126-cysteine 140, cysteine 130-cysteine 142, and cysteine 135-cysteine 148. The propeptide occupies 152 to 158 (GLPSAAA).

The protein belongs to the cyclotide family. Moebius subfamily. In terms of processing, kalata-B3 and kalata-B6 are cyclic peptides.

Functionally, probably participates in a plant defense mechanism. Has hemolytic activity. The chain is Kalata-B3/B6 (OAK2) from Oldenlandia affinis.